A 43-amino-acid chain; its full sequence is Protein PsbN (43 aa).

The chain crosses the membrane as a helical span at residues 5 to 27 (TLVAISISRLLVSFTGYALYTAF).

This sequence belongs to the PsbN family.

It is found in the plastid. It localises to the chloroplast thylakoid membrane. In terms of biological role, may play a role in photosystem I and II biogenesis. This chain is Protein PsbN, found in Cycas taitungensis (Prince sago).